We begin with the raw amino-acid sequence, 354 residues long: Probable tartrate dehydrogenase/decarboxylase (354 aa).

Residues D221, D245, and D249 each coordinate Mn(2+).

The protein belongs to the isocitrate and isopropylmalate dehydrogenases family. Mg(2+) serves as cofactor. Requires Mn(2+) as cofactor. The cofactor is K(+).

It carries out the reaction tartrate + NAD(+) = 2-hydroxy-3-oxosuccinate + NADH + H(+). The enzyme catalyses (2R,3S)-tartrate + NAD(+) = 2-hydroxy-3-oxosuccinate + NADH + H(+). It catalyses the reaction (2R,3R)-tartrate + NAD(+) = 2-hydroxy-3-oxosuccinate + NADH + H(+). The catalysed reaction is (2R,3R)-tartrate + H(+) = (R)-glycerate + CO2. It carries out the reaction (R)-malate + NAD(+) = pyruvate + CO2 + NADH. In terms of biological role, has multiple catalytic activities. Apart from catalyzing the oxidation of (+)-tartrate to oxaloglycolate, also converts meso-tartrate to D-glycerate and catalyzes the oxidative decarboxylation of D-malate to pyruvate. The sequence is that of Probable tartrate dehydrogenase/decarboxylase (ycsA) from Bacillus subtilis (strain 168).